The primary structure comprises 221 residues: Protein-disulfide oxidoreductase DsbI (221 aa).

Residues 27–47 (FLWLLMAVAMGGLIILAHSFF) traverse the membrane as a helical segment. Cys-56 and Cys-59 form a disulfide bridge. A run of 2 helical transmembrane segments spans residues 64–84 (FAMFVMVFGGLIAAINPKNII) and 85–105 (LKLIGCLAAFYGSIMGIKFSV). Cys-128 and Cys-154 form a disulfide bridge. The chain crosses the membrane as a helical span at residues 189–209 (LAFYEYGAGVPAGVWAMFCTV).

Belongs to the DsbB family. DsbI subfamily. In terms of assembly, interacts with DsbL.

The protein resides in the cell inner membrane. In terms of biological role, required for disulfide bond formation in some proteins. Part of a redox system composed of DsbI and DsbL that mediates formation of an essential disulfide bond in AssT. This Lelliottia amnigena (Enterobacter amnigenus) protein is Protein-disulfide oxidoreductase DsbI.